The primary structure comprises 356 residues: UDP-N-acetylglucosamine--N-acetylmuramyl-(pentapeptide) pyrophosphoryl-undecaprenol N-acetylglucosamine transferase (356 aa).

Residues Ser198 and Gln289 each coordinate UDP-N-acetyl-alpha-D-glucosamine.

Belongs to the glycosyltransferase 28 family. MurG subfamily.

It is found in the cell membrane. It catalyses the reaction Mur2Ac(oyl-L-Ala-gamma-D-Glu-L-Lys-D-Ala-D-Ala)-di-trans,octa-cis-undecaprenyl diphosphate + UDP-N-acetyl-alpha-D-glucosamine = beta-D-GlcNAc-(1-&gt;4)-Mur2Ac(oyl-L-Ala-gamma-D-Glu-L-Lys-D-Ala-D-Ala)-di-trans,octa-cis-undecaprenyl diphosphate + UDP + H(+). Its pathway is cell wall biogenesis; peptidoglycan biosynthesis. Its function is as follows. Cell wall formation. Catalyzes the transfer of a GlcNAc subunit on undecaprenyl-pyrophosphoryl-MurNAc-pentapeptide (lipid intermediate I) to form undecaprenyl-pyrophosphoryl-MurNAc-(pentapeptide)GlcNAc (lipid intermediate II). This is UDP-N-acetylglucosamine--N-acetylmuramyl-(pentapeptide) pyrophosphoryl-undecaprenol N-acetylglucosamine transferase from Streptococcus thermophilus (strain CNRZ 1066).